We begin with the raw amino-acid sequence, 334 residues long: Protein-methionine-sulfoxide reductase catalytic subunit MsrP (334 aa).

A signal peptide (tat-type signal) is located at residues 1–44 (MKKNQFLKESDVTAESVFFMKRRQVLKALGISATALSLPHAAHA). Residues N88, 91–92 (YE), C146, T181, N233, R238, and 249–251 (GIK) contribute to the Mo-molybdopterin site.

Belongs to the MsrP family. Heterodimer of a catalytic subunit (MsrP) and a heme-binding subunit (MsrQ). Requires Mo-molybdopterin as cofactor. Post-translationally, exported by the Tat system. Can also be exported by the Sec system.

The protein resides in the periplasm. It carries out the reaction L-methionyl-[protein] + a quinone + H2O = L-methionyl-(S)-S-oxide-[protein] + a quinol. The catalysed reaction is L-methionyl-[protein] + a quinone + H2O = L-methionyl-(R)-S-oxide-[protein] + a quinol. Part of the MsrPQ system that repairs oxidized periplasmic proteins containing methionine sulfoxide residues (Met-O), using respiratory chain electrons. Thus protects these proteins from oxidative-stress damage caused by reactive species of oxygen and chlorine. MsrPQ is essential for the maintenance of envelope integrity under bleach stress, rescuing a wide series of structurally unrelated periplasmic proteins from methionine oxidation, including the primary periplasmic chaperone SurA and the lipoprotein Pal. The catalytic subunit MsrP is non-stereospecific, being able to reduce both (R-) and (S-) diastereoisomers of methionine sulfoxide. Can catalyze the reduction of a variety of substrates in vitro, including dimethyl sulfoxide, trimethylamine N-oxide, phenylmethyl sulfoxide and L-methionine sulfoxide. Cannot reduce cyclic N-oxides. Shows no activity as sulfite oxidase. This chain is Protein-methionine-sulfoxide reductase catalytic subunit MsrP, found in Escherichia coli (strain K12).